Reading from the N-terminus, the 419-residue chain is UPF0229 protein Tbd_1233 (419 aa).

The interval 85–108 (GDRIDRPAGEGGGGSGGSPDGEGM) is disordered. The segment covering 93 to 104 (GEGGGGSGGSPD) has biased composition (gly residues).

It belongs to the UPF0229 family.

The polypeptide is UPF0229 protein Tbd_1233 (Thiobacillus denitrificans (strain ATCC 25259 / T1)).